The primary structure comprises 407 residues: Tryptophan synthase beta chain (407 aa).

The span at 1 to 11 (MSTAPSQQHAS) shows a compositional bias: polar residues. Residues 1-25 (MSTAPSQQHASAQVPDPRGRFGDFG) form a disordered region. Lys100 carries the N6-(pyridoxal phosphate)lysine modification.

It belongs to the TrpB family. In terms of assembly, tetramer of two alpha and two beta chains. Pyridoxal 5'-phosphate is required as a cofactor.

The enzyme catalyses (1S,2R)-1-C-(indol-3-yl)glycerol 3-phosphate + L-serine = D-glyceraldehyde 3-phosphate + L-tryptophan + H2O. It functions in the pathway amino-acid biosynthesis; L-tryptophan biosynthesis; L-tryptophan from chorismate: step 5/5. Functionally, the beta subunit is responsible for the synthesis of L-tryptophan from indole and L-serine. The sequence is that of Tryptophan synthase beta chain from Rhodopirellula baltica (strain DSM 10527 / NCIMB 13988 / SH1).